Reading from the N-terminus, the 294-residue chain is NAD kinase (294 aa).

The active-site Proton acceptor is the aspartate 73. NAD(+) contacts are provided by residues 73-74, 147-148, arginine 175, aspartate 177, and 188-193; these read DG, ND, and TAYALS.

This sequence belongs to the NAD kinase family. A divalent metal cation is required as a cofactor.

Its subcellular location is the cytoplasm. The enzyme catalyses NAD(+) + ATP = ADP + NADP(+) + H(+). Involved in the regulation of the intracellular balance of NAD and NADP, and is a key enzyme in the biosynthesis of NADP. Catalyzes specifically the phosphorylation on 2'-hydroxyl of the adenosine moiety of NAD to yield NADP. This Nitrosospira multiformis (strain ATCC 25196 / NCIMB 11849 / C 71) protein is NAD kinase.